The chain runs to 429 residues: Keratin, type I cytoskeletal 20 (429 aa).

The tract at residues 1–26 (MDFSRRSFHRSLSSSSQGPALSTSGS) is disordered. Residues 1–74 (MDFSRRSFHR…SNGGDLFGGN (74 aa)) form a head region. The span at 10–26 (RSLSSSSQGPALSTSGS) shows a compositional bias: low complexity. Phosphoserine is present on residues Ser-13, Ser-16, and Ser-26. Residues 75-110 (EKLAMQNLNDRLASYLEKVRSLEQSNSKLEAQIKQW) are coil 1A. The region spanning 75–386 (EKLAMQNLND…RLLEGEDIKT (312 aa)) is the IF rod domain. Residues 111–128 (YETNAPSTIRDYSSYYAQ) are linker 1. Residues 129 to 220 (IKELQDQIKD…KEHQEEVEVL (92 aa)) form a coil 1B region. The interval 221–243 (RRQLGNNVNVEVDAAPGLNLGEI) is linker 12. The coil 2 stretch occupies residues 244 to 382 (MNEMRQKYEI…ATYRRLLEGE (139 aa)). Residues 383 to 429 (DIKTTEYQLNTLEAKDIKKTRKIKTVVEEVVDGKVVSSEVKEIEENI) form a tail region.

The protein belongs to the intermediate filament family. Heterotetramer of two type I and two type II keratins. Associates with KRT8. In terms of processing, hyperphosphorylation at Ser-13 occurs during the early stages of apoptosis but becomes less prominent during the later stages. Phosphorylation at Ser-13 also increases in response to stress brought on by cell injury. Proteolytically cleaved by caspases during apoptosis. Cleavage occurs at Asp-233. As to expression, expressed predominantly in the intestinal epithelium in differentiated villus cells.

Functionally, plays a significant role in maintaining keratin filament organization in intestinal epithelia. When phosphorylated, plays a role in the secretion of mucin in the small intestine. The protein is Keratin, type I cytoskeletal 20 (Krt20) of Rattus norvegicus (Rat).